A 151-amino-acid chain; its full sequence is Deoxyuridine 5'-triphosphate nucleotidohydrolase (151 aa).

Substrate is bound by residues 70–72 (RSG), Asn83, 87–89 (LID), and Met97.

The protein belongs to the dUTPase family. Mg(2+) serves as cofactor.

The catalysed reaction is dUTP + H2O = dUMP + diphosphate + H(+). It functions in the pathway pyrimidine metabolism; dUMP biosynthesis; dUMP from dCTP (dUTP route): step 2/2. Functionally, this enzyme is involved in nucleotide metabolism: it produces dUMP, the immediate precursor of thymidine nucleotides and it decreases the intracellular concentration of dUTP so that uracil cannot be incorporated into DNA. This chain is Deoxyuridine 5'-triphosphate nucleotidohydrolase, found in Pseudomonas putida (strain ATCC 47054 / DSM 6125 / CFBP 8728 / NCIMB 11950 / KT2440).